The primary structure comprises 811 residues: RFX-like DNA-binding protein RFX1 (811 aa).

2 disordered regions span residues 48 to 92 (EPTS…TYLP) and 111 to 156 (LLHQ…QRQP). Low complexity predominate over residues 51–70 (SRGSNDNSNGPSNGSSVNSN). The span at 140–149 (SPTPTQPPAQ) shows a compositional bias: pro residues. Position 173 is a phosphoserine (S173). Residues 181–222 (KSEETLNNNPPTAAKRTNTFPSIPSSTKKQKTSQEKRISSIS) form a disordered region. Residues 185 to 204 (TLNNNPPTAAKRTNTFPSIP) show a composition bias toward polar residues. Residues 285–360 (ALLWLMKNCK…YHYCGLKLTV (76 aa)) constitute a DNA-binding region (RFX-type winged-helix). Over residues 377–391 (LVHNNDPISPLSSPS) the composition is skewed to low complexity. The segment at 377 to 461 (LVHNNDPISP…AANNPTGTLS (85 aa)) is disordered. Positions 409-428 (NRKSLSRTGSPVKQSSNDNP) are enriched in polar residues. The span at 434 to 445 (ESQHPNETEANK) shows a compositional bias: basic and acidic residues.

This sequence belongs to the RFX family.

The protein is RFX-like DNA-binding protein RFX1 (RFX1) of Saccharomyces cerevisiae (strain ATCC 204508 / S288c) (Baker's yeast).